The following is a 755-amino-acid chain: Exocyst complex component 3 (755 aa).

Coiled-coil stretches lie at residues 34–62 and 618–649; these read DQLD…AAIQ and RAVM…QLRF. At Lys-38 the chain carries N6-acetyllysine.

This sequence belongs to the SEC6 family. As to quaternary structure, the exocyst complex is composed of EXOC1, EXOC2, EXOC3, EXOC4, EXOC5, EXOC6, EXOC7 and EXOC8. Interacts with EXOC3L1. Interacts with BIRC6/bruce. Interacts with MYRIP. Interacts with SLC6A9. As to expression, widely expressed, with highest levels in kidney, followed by brain (at protein level).

The protein localises to the cytoplasm. Its subcellular location is the perinuclear region. The protein resides in the cell projection. It is found in the growth cone. It localises to the neuron projection. The protein localises to the midbody. Its subcellular location is the golgi apparatus. In terms of biological role, component of the exocyst complex involved in the docking of exocytic vesicles with fusion sites on the plasma membrane. This chain is Exocyst complex component 3 (Exoc3), found in Rattus norvegicus (Rat).